We begin with the raw amino-acid sequence, 406 residues long: Tubby-like F-box protein 3 (406 aa).

The F-box domain occupies 50–105 (SCWASMPPELLRDVLMRIEQSEDTWPSRKNVVSCAGVCRNWREIVKEIVRVPELSS).

The protein belongs to the TUB family. As to expression, ubiquitous at low levels. Not detected in mature siliques.

The protein resides in the cell membrane. The protein localises to the plastid. It localises to the nucleus. It is found in the nucleoplasm. Its subcellular location is the cytoplasm. Its function is as follows. Involved in abiotic stress signaling. Tethered to plasma membrane (PM) and probably bound to phosphatidylinositol 4,5-bisphosphate. Abiotic stresses (drought, salt, H(2)O(2)) trigger phospholipase C mediated PM dislogement and plastidial and nucleocytosolic relocation of TULP3. In Arabidopsis thaliana (Mouse-ear cress), this protein is Tubby-like F-box protein 3.